The chain runs to 447 residues: Glutamate-1-semialdehyde 2,1-aminomutase (447 aa).

Lys272 carries the post-translational modification N6-(pyridoxal phosphate)lysine.

This sequence belongs to the class-III pyridoxal-phosphate-dependent aminotransferase family. HemL subfamily. In terms of assembly, homodimer. The cofactor is pyridoxal 5'-phosphate.

The protein resides in the cytoplasm. It carries out the reaction (S)-4-amino-5-oxopentanoate = 5-aminolevulinate. It functions in the pathway porphyrin-containing compound metabolism; protoporphyrin-IX biosynthesis; 5-aminolevulinate from L-glutamyl-tRNA(Glu): step 2/2. The chain is Glutamate-1-semialdehyde 2,1-aminomutase from Leifsonia xyli subsp. xyli (strain CTCB07).